The primary structure comprises 423 residues: Glutamate-1-semialdehyde 2,1-aminomutase (423 aa).

Position 258 is an N6-(pyridoxal phosphate)lysine (K258).

It belongs to the class-III pyridoxal-phosphate-dependent aminotransferase family. HemL subfamily. The cofactor is pyridoxal 5'-phosphate.

The protein localises to the cytoplasm. The catalysed reaction is (S)-4-amino-5-oxopentanoate = 5-aminolevulinate. It participates in porphyrin-containing compound metabolism; protoporphyrin-IX biosynthesis; 5-aminolevulinate from L-glutamyl-tRNA(Glu): step 2/2. This chain is Glutamate-1-semialdehyde 2,1-aminomutase, found in Pyrobaculum aerophilum (strain ATCC 51768 / DSM 7523 / JCM 9630 / CIP 104966 / NBRC 100827 / IM2).